We begin with the raw amino-acid sequence, 235 residues long: Phosphoribosylaminoimidazole-succinocarboxamide synthase (235 aa).

Belongs to the SAICAR synthetase family.

It catalyses the reaction 5-amino-1-(5-phospho-D-ribosyl)imidazole-4-carboxylate + L-aspartate + ATP = (2S)-2-[5-amino-1-(5-phospho-beta-D-ribosyl)imidazole-4-carboxamido]succinate + ADP + phosphate + 2 H(+). The protein operates within purine metabolism; IMP biosynthesis via de novo pathway; 5-amino-1-(5-phospho-D-ribosyl)imidazole-4-carboxamide from 5-amino-1-(5-phospho-D-ribosyl)imidazole-4-carboxylate: step 1/2. The sequence is that of Phosphoribosylaminoimidazole-succinocarboxamide synthase from Thermoanaerobacter pseudethanolicus (strain ATCC 33223 / 39E) (Clostridium thermohydrosulfuricum).